An 85-amino-acid chain; its full sequence is Double gene block protein 2 (85 aa).

The Lumenal segment spans residues 1-2; the sequence is MK. A helical transmembrane segment spans residues 3–23; that stretch reads VLLVTGVLGLLLLIKWKSQST. Topologically, residues 24–36 are cytoplasmic; the sequence is STSNQTCQCPTSP. Residues 37-56 traverse the membrane as a helical segment; sequence WVIYAFYNSLSLVLLLCHLI. Over 57–85 the chain is Lumenal; it reads PEIKPIHTSYNTHDSSKQQHISINTGNGK.

Belongs to the carmovirus double gene block protein 2 family.

It localises to the host endoplasmic reticulum membrane. In terms of biological role, cell-to-cell movement function. In Turnip crinkle virus (TCV), this protein is Double gene block protein 2.